The primary structure comprises 87 residues: Neutrophil antibiotic peptide NP-3B (87 aa).

The signal sequence occupies residues 1 to 19 (MRTLILLTTLLLLALHTQA). Positions 20 to 58 (ESPQGSTKEAPDEEQDISVFFGGDKGTALQDAAVKAGVT) are excised as a propeptide. Cystine bridges form between C59/C87, C61/C76, and C66/C86.

This sequence belongs to the alpha-defensin family.

The protein localises to the secreted. Functionally, active in vitro against S.aureus, fungi, Gram-positive and Gram-negative bacteria and to a lesser extent against an enveloped virus. This chain is Neutrophil antibiotic peptide NP-3B, found in Rattus norvegicus (Rat).